A 332-amino-acid chain; its full sequence is Polygalacturonase inhibitor 1 (332 aa).

The N-terminal stretch at 1–24 (MASTASFMLAVLLAVAVAAAPARA) is a signal peptide. Intrachain disulfides connect cysteine 27/cysteine 58 and cysteine 59/cysteine 66. LRR repeat units follow at residues 72 to 96 (VNNVFIDGANDVRGQIPSAVAGLTA), 97 to 118 (LMSLSLFRLPGLSGPIPACLTA), 119 to 142 (LSNLQFLTISHTNVSGVIPDSLAR), 143 to 166 (IRSLDSVDLSHNSLTGPIPNSFSD), 167 to 192 (LPNLRSLDLRSNKLTGCIPAGLVQGQ), 193 to 215 (FRSLILSYNQLTGPIPRDDAQDE), 216 to 236 (INTVDLSHNRLTGDASFLFAA), 237 to 259 (GRPIGKVDLSWNDLDFDLSKLVF), 260 to 283 (PPELTYLDLSHNRIRGTVPRSLAA), and 284 to 310 (LSTLQTLDLSYNRLCGPLPRLHGVIRH). N-linked (GlcNAc...) asparagine glycosylation is present at asparagine 131. 3 disulfides stabilise this stretch: cysteine 298-cysteine 312, cysteine 298-cysteine 320, and cysteine 320-cysteine 329.

It belongs to the polygalacturonase-inhibiting protein family. As to expression, highly expressed in calli, immature and mature panicles, and in three inner floral organs: lodicules, stamens and carpels. Expressed at low level in seedling roots and mature stems.

Its subcellular location is the secreted. It is found in the cell wall. Its function is as follows. Inhibitor of fungal polygalacturonase. Regulates floral organ number. In Oryza sativa subsp. japonica (Rice), this protein is Polygalacturonase inhibitor 1.